Here is a 146-residue protein sequence, read N- to C-terminus: uncharacterized protein (146 aa).

One can recognise an HTH marR-type domain in the interval 9–141 (VADIEKSLRH…FEKSLMKLQH (133 aa)). The H-T-H motif DNA-binding region spans 55 to 78 (IGELSGKMYLACSTTTDLIDRMQK).

This is an uncharacterized protein from Bacillus subtilis (strain 168).